A 446-amino-acid chain; its full sequence is Cytochrome P450 monooxygenase ATR14 (446 aa).

A disordered region spans residues 403–446; sequence NFTYPDEFRPDRWLDDRDQKEYEHDHGDAMQPFSVGPRDCPSQK. The segment covering 408 to 430 has biased composition (basic and acidic residues); sequence DEFRPDRWLDDRDQKEYEHDHGD. Cysteine 442 serves as a coordination point for heme.

The protein belongs to the cytochrome P450 family. Requires heme as cofactor.

It functions in the pathway mycotoxin biosynthesis. Cytochrome P450 monooxygenase; part of the core atranone cluster (CAC) which products are predicted to catalyze most or all steps of mycotoxin atranone synthesis, starting from geranylgeranyl pyrophosphate (GGPP). The initial cyclization of GGPP to dolabellane is probably performed by the terpene cyclase ATR13. The Baeyer-Villiger oxidation near the end of the atranone synthesis, which converts atranones D and E to atranones F and G is predicted to be catalyzed by the monooxygenase ATR8. Of the CAC's other predicted gene products, the reducing PKS ATR6 might synthesize a polyketide chain. This polyketide is probably transferred onto the atranone backbone by the polyketide transferase ATR5. Other predicted CAC products include 4 oxygenases (ATR2, ATR3, ATR4, and ATR14), 3 short-chain reductases (ATR7, ATR9, and ATR10), and a methyltransferase (ATR12). These may all be involved in the various steps of atranone biosynthesis, although their specific roles must await experimental determination. This is Cytochrome P450 monooxygenase ATR14 from Stachybotrys chlorohalonatus (strain IBT 40285).